Consider the following 57-residue polypeptide: RPRFCELAPSAGSCFGFVSSYYYNRYSNTCHSFTYSGCGKNANRFRTIDECNRTCVV.

In terms of domain architecture, BPTI/Kunitz inhibitor spans 5 to 55 (CELAPSAGSCFGFVSSYYYNRYSNTCHSFTYSGCGKNANRFRTIDECNRTC). Disulfide bonds link cysteine 5/cysteine 55, cysteine 14/cysteine 38, and cysteine 30/cysteine 51.

It belongs to the venom Kunitz-type family. In terms of tissue distribution, expressed by the venom gland.

Its subcellular location is the secreted. Functionally, serine protease inhibitor that inhibits chymotrypsin. Also interacts with vasopressin V2 receptor (V2R/AVPR2). Inhibits vasopressin binding human V2R in the nanomolar range (Ki=7.87 nM), and also moderately inhibits vasopressin-induced cAMP production (IC(50)=208 nM). In vivo, intraperitoneal injection of this protein into rats increases diuresis by 1.6-fold, without any loss of electrolytes. The sequence is that of Kunitz-type serine protease inhibitor from Naja naja (Indian cobra).